A 162-amino-acid polypeptide reads, in one-letter code: Endoribonuclease YbeY (162 aa).

Residues histidine 128, histidine 132, and histidine 138 each contribute to the Zn(2+) site.

It belongs to the endoribonuclease YbeY family. It depends on Zn(2+) as a cofactor.

It localises to the cytoplasm. Functionally, single strand-specific metallo-endoribonuclease involved in late-stage 70S ribosome quality control and in maturation of the 3' terminus of the 16S rRNA. This chain is Endoribonuclease YbeY, found in Lactococcus lactis subsp. cremoris (strain MG1363).